A 565-amino-acid chain; its full sequence is Urocanate hydratase (565 aa).

NAD(+) is bound by residues 61–62, Gln139, 185–187, Glu205, Arg210, 251–252, 272–276, 282–283, and Tyr331; these read GG, GMG, NA, QTSAH, and YL. Residue Cys419 is part of the active site. Positions 453–472 are disordered; it reads LDSGSVASPNRETESMRDGS. Residues 463-472 are compositionally biased toward basic and acidic residues; it reads RETESMRDGS. An NAD(+)-binding site is contributed by Gly501.

Belongs to the urocanase family. The cofactor is NAD(+).

The protein localises to the cytoplasm. It catalyses the reaction 4-imidazolone-5-propanoate = trans-urocanate + H2O. The protein operates within amino-acid degradation; L-histidine degradation into L-glutamate; N-formimidoyl-L-glutamate from L-histidine: step 2/3. Its function is as follows. Catalyzes the conversion of urocanate to 4-imidazolone-5-propionate. The protein is Urocanate hydratase of Pseudomonas savastanoi pv. phaseolicola (strain 1448A / Race 6) (Pseudomonas syringae pv. phaseolicola (strain 1448A / Race 6)).